A 770-amino-acid polypeptide reads, in one-letter code: Serine/threonine-protein kinase PLK4 (770 aa).

A Protein kinase domain is found at 14 to 267; that stretch reads YEVQHLLGKG…LEHVLRHPFL (254 aa). ATP contacts are provided by residues 20–28 and K43; that span reads LGKGGFASV. The Proton acceptor role is filled by D138. The 118-residue stretch at 383 to 500 folds into the Cryptic POLO box 1 (CPB1) domain; the sequence is EERISVPPLN…DRFVGLVKSK (118 aa). Residues 501 to 604 form the Cryptic POLO box 2 (CPB2) domain; the sequence is TPKVTYFSAL…GRRPVTEVQP (104 aa). Residues 662–741 form the POLO box domain; it reads PIKRINLPDI…LPHIQLKLKT (80 aa).

Belongs to the protein kinase superfamily. Ser/Thr protein kinase family. CDC5/Polo subfamily. Homodimer. Post-translationally, ubiquitinated by the SCF(Slimb) ubiquitin ligase complex; leading to its degradation by the proteasome during interphase and regulating centriole number and ensuring the block to centriole reduplication.

The protein resides in the cytoplasm. The protein localises to the cytoskeleton. Its subcellular location is the microtubule organizing center. It localises to the centrosome. It is found in the centriole. The catalysed reaction is L-seryl-[protein] + ATP = O-phospho-L-seryl-[protein] + ADP + H(+). It catalyses the reaction L-threonyl-[protein] + ATP = O-phospho-L-threonyl-[protein] + ADP + H(+). In terms of biological role, serine/threonine-protein kinase that plays a central role in centriole duplication. Able to trigger procentriole formation on the surface of the mother centriole cylinder, using mother centriole as a platform, leading to the recruitment of centriole biogenesis proteins such as sas-6. When overexpressed, it is able to induce centrosome amplification through the simultaneous generation of multiple procentrioles adjoining each parental centriole during S phase. Centrosome amplification following overexpression can initiate tumorigenesis, highlighting the importance of centrosome regulation in cancers. The sequence is that of Serine/threonine-protein kinase PLK4 (SAK) from Drosophila ananassae (Fruit fly).